We begin with the raw amino-acid sequence, 152 residues long: Small ribosomal subunit protein uS13 (152 aa).

The protein belongs to the universal ribosomal protein uS13 family.

Its subcellular location is the cytoplasm. Located at the top of the head of the 40S subunit, it contacts several helices of the 18S rRNA. This Argopecten irradians (Bay scallop) protein is Small ribosomal subunit protein uS13 (RPS18).